The primary structure comprises 186 residues: Transposon Tn21 resolvase (186 aa).

The Resolvase/invertase-type recombinase catalytic domain maps to 4–137; it reads QRIGYIRVST…EGIALAKQRG (134 aa). Catalysis depends on S12, which acts as the O-(5'-phospho-DNA)-serine intermediate. Residues 164–183 constitute a DNA-binding region (H-T-H motif); the sequence is KTKLAREFGISRETLYQYLR.

This sequence belongs to the site-specific recombinase resolvase family.

Resolvase catalyzes the resolution (a site-specific recombination) of the cointegrated replicon to yield the final transposition products. This is Transposon Tn21 resolvase (tnpR) from Escherichia coli.